The chain runs to 157 residues: Transcription elongation factor GreA (157 aa).

This sequence belongs to the GreA/GreB family.

Functionally, necessary for efficient RNA polymerase transcription elongation past template-encoded arresting sites. The arresting sites in DNA have the property of trapping a certain fraction of elongating RNA polymerases that pass through, resulting in locked ternary complexes. Cleavage of the nascent transcript by cleavage factors such as GreA or GreB allows the resumption of elongation from the new 3'terminus. GreA releases sequences of 2 to 3 nucleotides. This is Transcription elongation factor GreA from Maricaulis maris (strain MCS10) (Caulobacter maris).